The primary structure comprises 434 residues: ATP-dependent protease ATPase subunit HslU (434 aa).

Residues isoleucine 18, 60-65 (GVGKTE), aspartate 247, glutamate 312, and arginine 384 each bind ATP.

The protein belongs to the ClpX chaperone family. HslU subfamily. A double ring-shaped homohexamer of HslV is capped on each side by a ring-shaped HslU homohexamer. The assembly of the HslU/HslV complex is dependent on binding of ATP.

The protein resides in the cytoplasm. In terms of biological role, ATPase subunit of a proteasome-like degradation complex; this subunit has chaperone activity. The binding of ATP and its subsequent hydrolysis by HslU are essential for unfolding of protein substrates subsequently hydrolyzed by HslV. HslU recognizes the N-terminal part of its protein substrates and unfolds these before they are guided to HslV for hydrolysis. The chain is ATP-dependent protease ATPase subunit HslU from Brucella melitensis biotype 2 (strain ATCC 23457).